Here is a 301-residue protein sequence, read N- to C-terminus: Sulfate adenylyltransferase subunit 2 (301 aa).

The protein belongs to the PAPS reductase family. CysD subfamily. In terms of assembly, heterodimer composed of CysD, the smaller subunit, and CysN.

The catalysed reaction is sulfate + ATP + H(+) = adenosine 5'-phosphosulfate + diphosphate. It functions in the pathway sulfur metabolism; hydrogen sulfide biosynthesis; sulfite from sulfate: step 1/3. Functionally, with CysN forms the ATP sulfurylase (ATPS) that catalyzes the adenylation of sulfate producing adenosine 5'-phosphosulfate (APS) and diphosphate, the first enzymatic step in sulfur assimilation pathway. APS synthesis involves the formation of a high-energy phosphoric-sulfuric acid anhydride bond driven by GTP hydrolysis by CysN coupled to ATP hydrolysis by CysD. The polypeptide is Sulfate adenylyltransferase subunit 2 (Trichlorobacter lovleyi (strain ATCC BAA-1151 / DSM 17278 / SZ) (Geobacter lovleyi)).